The following is a 315-amino-acid chain: Aldo-keto reductase family 4 member C11 (315 aa).

Ala2 bears the N-acetylalanine mark. Residues 23-24 and Asp47 each bind NADP(+); that span reads TW. Tyr52 acts as the Proton donor in catalysis. NADP(+) contacts are provided by residues His114, 158 to 159, Gln180, 207 to 213, 256 to 258, and 262 to 266; these read SN, SPLGSPG, KST, and RIREN. A Phosphoserine modification is found at Ser295.

The protein belongs to the aldo/keto reductase family.

Its function is as follows. Oxidoreductase that may act on a broad range of substrates such as ketosteroids, aldehydes, ketones and sugars. The protein is Aldo-keto reductase family 4 member C11 (AKR4C11) of Arabidopsis thaliana (Mouse-ear cress).